The primary structure comprises 216 residues: Phosphatidylserine decarboxylase proenzyme (216 aa).

The active-site Schiff-base intermediate with substrate; via pyruvic acid is serine 183. Serine 183 carries the pyruvic acid (Ser); by autocatalysis modification.

Belongs to the phosphatidylserine decarboxylase family. PSD-A subfamily. As to quaternary structure, heterodimer of a large membrane-associated beta subunit and a small pyruvoyl-containing alpha subunit. The cofactor is pyruvate. Post-translationally, is synthesized initially as an inactive proenzyme. Formation of the active enzyme involves a self-maturation process in which the active site pyruvoyl group is generated from an internal serine residue via an autocatalytic post-translational modification. Two non-identical subunits are generated from the proenzyme in this reaction, and the pyruvate is formed at the N-terminus of the alpha chain, which is derived from the carboxyl end of the proenzyme. The post-translation cleavage follows an unusual pathway, termed non-hydrolytic serinolysis, in which the side chain hydroxyl group of the serine supplies its oxygen atom to form the C-terminus of the beta chain, while the remainder of the serine residue undergoes an oxidative deamination to produce ammonia and the pyruvoyl prosthetic group on the alpha chain.

The protein resides in the cell membrane. The enzyme catalyses a 1,2-diacyl-sn-glycero-3-phospho-L-serine + H(+) = a 1,2-diacyl-sn-glycero-3-phosphoethanolamine + CO2. Its pathway is phospholipid metabolism; phosphatidylethanolamine biosynthesis; phosphatidylethanolamine from CDP-diacylglycerol: step 2/2. Functionally, catalyzes the formation of phosphatidylethanolamine (PtdEtn) from phosphatidylserine (PtdSer). The sequence is that of Phosphatidylserine decarboxylase proenzyme from Cupriavidus taiwanensis (strain DSM 17343 / BCRC 17206 / CCUG 44338 / CIP 107171 / LMG 19424 / R1) (Ralstonia taiwanensis (strain LMG 19424)).